The sequence spans 208 residues: uncharacterized protein (208 aa).

6 helical membrane-spanning segments follow: residues 35–55 (LLLL…SYLV), 76–96 (LMYA…YFAS), 102–122 (FFWP…AIIW), 132–152 (ICTF…LWFF), 156–176 (APAL…FVWL), and 188–208 (NAIA…SLYL).

The protein belongs to the TMEM86 family.

The protein resides in the cell membrane. This is an uncharacterized protein from Escherichia coli O157:H7.